Reading from the N-terminus, the 513-residue chain is 2-isopropylmalate synthase (513 aa).

The region spanning 5–268 (LIIFDTTLRD…DLRVDTSQIV (264 aa)) is the Pyruvate carboxyltransferase domain. Residues Asp-14, His-202, His-204, and Asn-239 each coordinate Mn(2+). The regulatory domain stretch occupies residues 394–513 (RLLALSQHSE…SKAERVAAQG (120 aa)).

Belongs to the alpha-IPM synthase/homocitrate synthase family. LeuA type 1 subfamily. In terms of assembly, homodimer. Requires Mn(2+) as cofactor.

Its subcellular location is the cytoplasm. It carries out the reaction 3-methyl-2-oxobutanoate + acetyl-CoA + H2O = (2S)-2-isopropylmalate + CoA + H(+). It participates in amino-acid biosynthesis; L-leucine biosynthesis; L-leucine from 3-methyl-2-oxobutanoate: step 1/4. Catalyzes the condensation of the acetyl group of acetyl-CoA with 3-methyl-2-oxobutanoate (2-ketoisovalerate) to form 3-carboxy-3-hydroxy-4-methylpentanoate (2-isopropylmalate). This Leptothrix cholodnii (strain ATCC 51168 / LMG 8142 / SP-6) (Leptothrix discophora (strain SP-6)) protein is 2-isopropylmalate synthase.